Here is a 206-residue protein sequence, read N- to C-terminus: Large ribosomal subunit protein bL25 (206 aa).

The segment at 168 to 206 is disordered; sequence DPEESVVTVEVPEDASESTAAPEAAAPAADAAAPAADAK. The span at 184–206 shows a compositional bias: low complexity; sequence ESTAAPEAAAPAADAAAPAADAK.

This sequence belongs to the bacterial ribosomal protein bL25 family. CTC subfamily. Part of the 50S ribosomal subunit; part of the 5S rRNA/L5/L18/L25 subcomplex. Contacts the 5S rRNA. Binds to the 5S rRNA independently of L5 and L18.

In terms of biological role, this is one of the proteins that binds to the 5S RNA in the ribosome where it forms part of the central protuberance. In Bifidobacterium longum (strain DJO10A), this protein is Large ribosomal subunit protein bL25.